The sequence spans 354 residues: Protein sex-lethal (354 aa).

The disordered stretch occupies residues 1–20 (MYGNNNPGSNNNNGGYPPYG). RRM domains lie at 127–205 (TNLI…YARP) and 213–293 (TNLY…LAQE).

In terms of assembly, part of a complex containing fl(2)d, Sxl and vir. Interacts with nito. Interacts with Unr; cooperates with Sxl to prevent translation of msl-2 transcripts. Interacts with how; promoting nuclear retention of msl-2 transcripts. In terms of tissue distribution, the embryo-specific isoform is not expressed in the pole cells, which are the progenitors of the germline.

Its subcellular location is the nucleus. The protein resides in the cytoplasm. Sex determination switch protein, which controls sexual development and dosage compensation in females. Sxl protein is only active in females: it is inactive in males throughout development. Acts as a mRNA-binding protein, which specifically binds to a subset of pre-mRNAs and mRNAs and regulates their processing and/or translation. Promotes sexual development by controlling the female-specific alternative splicing of the transformer (tra) pre-mRNA: binds tightly to a characteristic uridine-rich polypyrimidine tract at the non-sex specific 3' splice site in one of the tra introns, preventing the general splicing factor U2AF from binding to this site and forcing it to bind to the female-specific 3' splice site. Acts as an inhibitor of dosage compensation in females by preventing production of msl-2 protein, an essential component of the MSL complex, the complex that mediates X-chromosome dosage compensation. Specifially binds to uridine stretches in both the 5'- and 3'-UTR of msl-2 transcripts. Sxl first acts at the splicing level by promoting retention of an intron in the 5' UTR of msl-2 pre-mRNA. The retained intron contains Sxl-binding sites that are required for subsequent steps of repression: after msl-2 mRNA export into the cytoplasm, Sxl coordinates its translational repression by targeting early steps of translation initiation. Together with how, Sxl also prevents production of msl-2 protein by preventing nuclear export of msl-2 transcripts. This chain is Protein sex-lethal, found in Drosophila subobscura (Fruit fly).